The following is a 459-amino-acid chain: Proton-coupled folate transporter (459 aa).

Position 1 is an N-acetylmethionine (Met-1). Residues 1-25 (MEGRANSPGEPRAWPTRSVLCRGCV) are Cytoplasmic-facing. Residues 26–44 (EPLVFLANFALVLQGPVTT) form a helical membrane-spanning segment. At 45 to 82 (QYLWHRFSADLGYNGTRHRDSCSNHSVDPIAQEVETLT) the chain is on the extracellular side. N-linked (GlcNAc...) asparagine glycans are attached at residues Asn-58 and Asn-68. Residues Cys-66 and Cys-298 are joined by a disulfide bond. The chain crosses the membrane as a helical span at residues 83–108 (SHWTLYMNVGGFLVGLFSSTLLGAWS). Over 109–112 (DCVG) the chain is Cytoplasmic. Residues 113 to 135 (RRPLLVLASLGLLLQTVLSIFVV) form a helical membrane-spanning segment. At 136 to 140 (QLHLH) the chain is on the extracellular side. A helical transmembrane segment spans residues 141-154 (IGYLVLGRILCALL). Residues 155–177 (GDFSGLLAASFASVADVSSSRTR) lie on the Cytoplasmic side of the membrane. The H(+) site is built by Asp-156 and Glu-185. The helical transmembrane segment at 178–203 (TIRMALLEACIGVAGMLASFIGGFLL) threads the bilayer. Topologically, residues 204–208 (QEQVY) are extracellular. A helical membrane pass occupies residues 209–227 (VNPFWLALAVLTVMTLYAA). Over 228 to 266 (FCFGETVKERTPTRLFTLRHHRSVIQLYVTQAPEKSRKH) the chain is Cytoplasmic. A helical transmembrane segment spans residues 267 to 289 (LALYSLAIFVMITVHLGAQDILT). His-281 contacts H(+). Topologically, residues 290-302 (LYELSAPLCWDSR) are extracellular. The chain crosses the membrane as a helical span at residues 303-325 (LISYGSAAQQLPYLTSLLGLRLL). Residues 326–331 (QYCLAD) lie on the Cytoplasmic side of the membrane. A helical membrane pass occupies residues 332–351 (TWVAEIGLVFNILGMMVFAF). Residues 352–355 (ATIT) lie on the Extracellular side of the membrane. Residues 356–376 (PLMFTGYGLLFLSLVVTPIIR) traverse the membrane as a helical segment. Residues 377 to 388 (AKLSRLVRQSEQ) are Cytoplasmic-facing. The chain crosses the membrane as a helical span at residues 389–414 (GALFSALACVNGLAMLMASGIFNSLY). Residues 415-422 (PATLNLMK) lie on the Extracellular side of the membrane. The helical transmembrane segment at 423 to 441 (GFPFLLAAGLLFIPAILMG) threads the bilayer. Over 442-459 (ILERDNHCPEFQEFSQSP) the chain is Cytoplasmic. A Phosphoserine modification is found at Ser-458.

Belongs to the major facilitator superfamily. SLC46A family. In terms of assembly, monomer. Expressed in retina and retinal pigment epithelium.

It localises to the cell membrane. The protein resides in the apical cell membrane. The protein localises to the basolateral cell membrane. Its subcellular location is the endosome membrane. It is found in the cytoplasm. The catalysed reaction is folate(in) + H(+)(in) = folate(out) + H(+)(out). It carries out the reaction (6S)-5-methyl-5,6,7,8-tetrahydrofolate(in) + H(+)(in) = (6S)-5-methyl-5,6,7,8-tetrahydrofolate(out) + H(+)(out). It catalyses the reaction methotrexate(in) + H(+)(in) = methotrexate(out) + H(+)(out). The enzyme catalyses pemetrexed(in) + H(+)(in) = pemetrexed(out) + H(+)(out). Proton-coupled folate symporter that mediates folate absorption using an H(+) gradient as a driving force. Involved in the intestinal absorption of folates at the brush-border membrane of the proximal jejunum, and the transport from blood to cerebrospinal fluid across the choroid plexus. Functions at acidic pH via alternate outward- and inward-open conformation states. Protonation of residues in the outward open state primes the protein for transport. Binding of folate promotes breaking of salt bridge network and subsequent closure of the extracellular gate, leading to the inward-open state and release of protons and folate. Also able to transport antifolate drugs, such as methotrexate and pemetrexed. Involved in FOLR1-mediated endocytosis by serving as a route of export of folates from acidified endosomes. Also acts as a lower-affinity, pH-independent heme carrier protein and constitutes the main importer of heme in the intestine. Imports heme in the retina and retinal pigment epithelium, in neurons of the hippocampus, in hepatocytes and in the renal epithelial cells. Hence, participates in the trafficking of heme and increases intracellular iron content. The chain is Proton-coupled folate transporter from Bos taurus (Bovine).